The chain runs to 1699 residues: Cilia- and flagella-associated protein 61 (1699 aa).

Positions 1–22 are enriched in polar residues; the sequence is MYSNNQLDNPNHSRSQYRNGDQ. 3 disordered regions span residues 1–23, 489–515, and 1340–1365; these read MYSN…GDQS, QLKR…DEFK, and ERDA…EENQ. Residues 489 to 503 show a composition bias toward basic residues; sequence QLKRPQKKVTKRPKR. Basic and acidic residues-rich tracts occupy residues 504–515 and 1340–1359; these read QKEEDKKEDEFK and ERDA…QSRD.

Its subcellular location is the cell projection. It localises to the cilium. Its function is as follows. As component of a spoke-associated complex, regulates ciliary mobility by mediating a stable and functional assembly of the radial spoke 3 (RS3). The chain is Cilia- and flagella-associated protein 61 from Tetrahymena thermophila (strain SB210).